The primary structure comprises 576 residues: Aspartate--tRNA ligase (576 aa).

Glutamate 171 is a binding site for L-aspartate. Residues 195-198 (QLFK) are aspartate. Arginine 217 contributes to the L-aspartate binding site. Residues 217–219 (RDE) and glutamine 226 each bind ATP. Histidine 450 contributes to the L-aspartate binding site. Residue glutamate 484 participates in ATP binding. Arginine 491 is an L-aspartate binding site. 536–539 (GLDR) is an ATP binding site.

The protein belongs to the class-II aminoacyl-tRNA synthetase family. Type 1 subfamily. Homodimer.

It is found in the cytoplasm. The enzyme catalyses tRNA(Asp) + L-aspartate + ATP = L-aspartyl-tRNA(Asp) + AMP + diphosphate. Its function is as follows. Catalyzes the attachment of L-aspartate to tRNA(Asp) in a two-step reaction: L-aspartate is first activated by ATP to form Asp-AMP and then transferred to the acceptor end of tRNA(Asp). The chain is Aspartate--tRNA ligase from Buchnera aphidicola subsp. Baizongia pistaciae (strain Bp).